The following is a 153-amino-acid chain: Histone H2B type W-T (153 aa).

Residues 1–54 (MATASAMAGPSSETTSEEQLITQEPKEANSTTSQKQSKQRKRGRHGPRRCHSNC) are disordered. A compositionally biased stretch (polar residues) spans 11 to 36 (SSETTSEEQLITQEPKEANSTTSQKQ). Over residues 37–52 (SKQRKRGRHGPRRCHS) the composition is skewed to basic residues.

Belongs to the histone H2B family. As to quaternary structure, can replace the conventional histone H2B in the nucleosome. The nucleosome is a histone octamer containing two molecules each of H2A, H2B, H3 and H4 assembled in one H3-H4 heterotetramer and two H2A-H2B heterodimers. The octamer wraps approximately 147 bp of DNA. As to expression, testis-specific (at protein level).

The protein localises to the nucleus membrane. It is found in the chromosome. The protein resides in the telomere. Its function is as follows. Atypical histone H2B that can form nucleosomes structurally and dynamically indistinguishable from those containing conventional H2B. Nucleosomes wrap and compact DNA into chromatin, limiting DNA accessibility to the cellular machineries which require DNA as a template. Histones thereby play a central role in transcription regulation, DNA repair, DNA replication and chromosomal stability. DNA accessibility is regulated via a complex set of post-translational modifications of histones, also called histone code, and nucleosome remodeling. However, unlike conventional H2B, does not recruit chromosome condensation factors and does not participate in the assembly of mitotic chromosomes. May be important for telomere function and play a role in spermatogenesis. In Homo sapiens (Human), this protein is Histone H2B type W-T.